Consider the following 252-residue polypeptide: MLTVTCASLSGGQGKTTTALFLGRSLAARGKRVLMIDADPQSSLSFYLGCELSSEQATLLEVLKKEVDVVDSLWNLDDRLALIPADDALDSAQDFLATSGMGAIVLRRRLSPLQDQFDFCVIDAPPQRSQLCMTSVGAADQLLIPAEASSKGLNSLLRTLDLVAEMSEVEAFQGQILGILPFRDRWLGRTQAKQSQKSLESMQEVAAGHPILPSILESEQFKKAIDQGVSLAALGYADLEYPFRTILEKLGC.

Positions 11, 12, 14, 15, 16, 17, 41, 147, 151, 182, 183, 216, 217, and 218 each coordinate ATP. Position 16 (Thr-16) interacts with Mg(2+).

Belongs to the ParA family. McdA subfamily. As to quaternary structure, self-associates (probably a homodimer), interacts with McdB probably via the C-terminus of both proteins. Shows no signs of filament formation. Homodimerizes in the presence of ATP, making extra nucleotide contacts than with ADP or AMP-PNP. Each subunit binds 1 ATP molecule; Glu-147, Lys-151 and Arg-183 cross the dimer interface to contact ATP in the other subunit, while Phe-182, Arg-183 and Phe-221 stack with the adenine base in their own subunit.

It localises to the cytoplasm. It is found in the nucleoid. It catalyses the reaction ATP + H2O = ADP + phosphate + H(+). Its function is as follows. McdA and McdB together mediate carboxysome (Cb) spacing, size, ultrastructure and probably inheritance in the cell. Together they prevent Cb aggregation. McdA is an ATPase that forms dynamic gradients on the nucleoid in response to adapter protein McdB, which associates with carboxysomes. The interplay between McdA gradients on the nucleoid and McdB-bound carboxysomes result in the equal spacing of Cbs along the cell length. Binds nucleoid DNA in an ATP-dependent manner; neither ADP nor ATP-gamma-S support DNA binding. Upon ATP-binding dimerizes and binds nucleoid DNA; the (McdA-ATP)2 dimer transiently binds McdB-bound Cbs. McdA's ATPase activity is stimulated 2-fold by DNA and McdB; ATP hydrolysis causes McdA release from DNA. Overexpression leads to loss of McdA oscillation, diffuse nucleoid staining by McdA with formation of large carboxysome aggregates that are in regions depleted of McdA; McdA remains nucleoid-associated. In terms of biological role, mutagenesis studies (characterized in vivo) suggest ATP binding, protein dimerization and a conformational change are necessary for nucleoid DNA-binding and binding to McdB-bound Cbs, which tethers Cbs to the nucleoid. Eventual McdB-stimulated ATP hydrolysis causes de-dimerization of McdA which no longer binds the nucleoid and releases McdB and Cbs. McdB-bound Cbs then move to a region of higher McdA concentration, distributing Cbs across the nucleoid. Incorrect positioning (aggregation) of carboxysomes results in reduced CO(2) fixation by encapsulated ribulose-1,5-bisphosphate carboxylase (RuBisCO, cbbL/cbbS), which leads to slower growth, cell elongation, asymmetric cell division and an increase in RuBisCO levels. The chain is Maintenance of carboxysome distribution protein A from Synechococcus elongatus (strain ATCC 33912 / PCC 7942 / FACHB-805) (Anacystis nidulans R2).